The chain runs to 545 residues: Putative transcription factor ecdB (545 aa).

Residues 12-39 (CDACRSRRVKCDGQRPSCMGCLSRGLDC) constitute a DNA-binding region (zn(2)-C6 fungal-type). The disordered stretch occupies residues 79–99 (PPPVLLASARPSSNPLSSHED).

It localises to the nucleus. The polypeptide is Putative transcription factor ecdB (Aspergillus rugulosus (Emericella rugulosa)).